A 393-amino-acid polypeptide reads, in one-letter code: MNIHEYQAKALFEKFGVLVPKGAPAKTPEEFVTALAQLPEGMIVVKSQIHAGGRGKGTFTDGFKGGVKVCKSKAEAREAAGKMLGNTLVTAQTGPAGRKVQTIYFNVGSQIKKEYYLAILLDRATSRPVIVASTEGGMEIEKVAHDTPDRIFKVHVDPAYGLADFQVRELVFKLGFTAAEGKNASKLIRALYRCFWENDASMVEVNPLITTPDGQVEALDAKVAFDDNALFRHPELVELRDLNEEDPKEIEASKHELNYIALDGNIACLVNGAGLAMSTMDIIKHFGGTPANFLDVGGGASREQVVAAFKIILGDKNVRGILVNIFGGIMDCNVIAQGIVDAVKEVGLELPLVVRLEGNNVAAGKATLATSGLKLVSGDSMADAAQKIVKLVA.

Positions 9–251 constitute an ATP-grasp domain; the sequence is KALFEKFGVL…LNEEDPKEIE (243 aa). ATP contacts are provided by residues Lys46, 53-55, Ser109, and Glu114; that span reads GRG. Mg(2+)-binding residues include Asn206 and Asp220. Substrate-binding positions include Asn271 and 328 to 330; that span reads GIM.

It belongs to the succinate/malate CoA ligase beta subunit family. In terms of assembly, heterotetramer of two alpha and two beta subunits. The cofactor is Mg(2+).

The catalysed reaction is succinate + ATP + CoA = succinyl-CoA + ADP + phosphate. It carries out the reaction GTP + succinate + CoA = succinyl-CoA + GDP + phosphate. The protein operates within carbohydrate metabolism; tricarboxylic acid cycle; succinate from succinyl-CoA (ligase route): step 1/1. In terms of biological role, succinyl-CoA synthetase functions in the citric acid cycle (TCA), coupling the hydrolysis of succinyl-CoA to the synthesis of either ATP or GTP and thus represents the only step of substrate-level phosphorylation in the TCA. The beta subunit provides nucleotide specificity of the enzyme and binds the substrate succinate, while the binding sites for coenzyme A and phosphate are found in the alpha subunit. This chain is Succinate--CoA ligase [ADP-forming] subunit beta, found in Opitutus terrae (strain DSM 11246 / JCM 15787 / PB90-1).